The following is a 166-amino-acid chain: Regulatory protein RecX (166 aa).

The protein belongs to the RecX family.

It localises to the cytoplasm. Functionally, modulates RecA activity. The chain is Regulatory protein RecX from Salmonella choleraesuis (strain SC-B67).